A 379-amino-acid chain; its full sequence is Lipid-A-disaccharide synthase (379 aa).

This sequence belongs to the LpxB family.

It catalyses the reaction a lipid X + a UDP-2-N,3-O-bis[(3R)-3-hydroxyacyl]-alpha-D-glucosamine = a lipid A disaccharide + UDP + H(+). It participates in bacterial outer membrane biogenesis; LPS lipid A biosynthesis. Condensation of UDP-2,3-diacylglucosamine and 2,3-diacylglucosamine-1-phosphate to form lipid A disaccharide, a precursor of lipid A, a phosphorylated glycolipid that anchors the lipopolysaccharide to the outer membrane of the cell. The chain is Lipid-A-disaccharide synthase from Idiomarina loihiensis (strain ATCC BAA-735 / DSM 15497 / L2-TR).